A 1584-amino-acid polypeptide reads, in one-letter code: Kinesin-like protein unc-104 (1584 aa).

One can recognise a Kinesin motor domain in the interval 3 to 347 (SVKVAVRVRP…LRYADRAKQI (345 aa)). 93–100 (GQTGSGKS) lines the ATP pocket. The microtubule-binding stretch occupies residues 183 to 335 (VCSYHDICNL…PADINFDETL (153 aa)). Coiled coils occupy residues 425–445 (EQKL…LRDM), 598–652 (IDLK…SYIS), and 777–797 (SIEK…TDAE). Positions 1366-1416 (IPMNKDPPTGNKAQELSDESGSNSITSPVSDKSLIKSSRSSDLLCRQKSKS) are disordered. The span at 1376–1394 (NKAQELSDESGSNSITSPV) shows a compositional bias: polar residues. Residues 1395-1409 (SDKSLIKSSRSSDLL) are compositionally biased toward low complexity. In terms of domain architecture, PH spans 1460–1558 (VVSKKGYMNF…WLYAINPLMA (99 aa)).

Belongs to the TRAFAC class myosin-kinesin ATPase superfamily. Kinesin family. Unc-104 subfamily. In terms of assembly, interacts with casy-1. In terms of tissue distribution, expressed in nerve ring, amphid commissure and ventral nerve cord (at protein level).

Its subcellular location is the cytoplasm. It localises to the cytoskeleton. The protein resides in the cell projection. The protein localises to the axon. Functionally, motor protein involved in microtubule-associated anterograde transport. Regulates the transport of synaptic vesicle precursors in the axon of DA motor neurons. Regulates the polarized sorting of axonal proteins. Essential for the transport of synaptic components during the synaptic remodeling of the DD motor neuron, probably downstream of cdk-5 and/or pct-1/cyy-1 complex. Required for the anterograde transport of neuropeptide-containing dense core vesicles along axons. Involved in necrotic cell death. The protein is Kinesin-like protein unc-104 (unc-104) of Caenorhabditis elegans.